The following is a 324-amino-acid chain: Rho crystallin (324 aa).

Position 2 is an N-acetylthreonine (Thr-2). 218-281 contacts NADP(+); it reads SVLGSHRDRN…SFTPARIKQN (64 aa).

Belongs to the aldo/keto reductase family. As to quaternary structure, monomer.

The protein is Rho crystallin of Aquarana catesbeiana (American bullfrog).